A 406-amino-acid polypeptide reads, in one-letter code: Probable tRNA sulfurtransferase (406 aa).

Positions 62–167 (AEVSNRLTKV…QDATYLSFED (106 aa)) constitute a THUMP domain. ATP is bound by residues 185–186 (ML), 210–211 (HF), arginine 267, glycine 289, and glutamine 298.

It belongs to the ThiI family.

It is found in the cytoplasm. It catalyses the reaction [ThiI sulfur-carrier protein]-S-sulfanyl-L-cysteine + a uridine in tRNA + 2 reduced [2Fe-2S]-[ferredoxin] + ATP + H(+) = [ThiI sulfur-carrier protein]-L-cysteine + a 4-thiouridine in tRNA + 2 oxidized [2Fe-2S]-[ferredoxin] + AMP + diphosphate. The catalysed reaction is [ThiS sulfur-carrier protein]-C-terminal Gly-Gly-AMP + S-sulfanyl-L-cysteinyl-[cysteine desulfurase] + AH2 = [ThiS sulfur-carrier protein]-C-terminal-Gly-aminoethanethioate + L-cysteinyl-[cysteine desulfurase] + A + AMP + 2 H(+). Its pathway is cofactor biosynthesis; thiamine diphosphate biosynthesis. In terms of biological role, catalyzes the ATP-dependent transfer of a sulfur to tRNA to produce 4-thiouridine in position 8 of tRNAs, which functions as a near-UV photosensor. Also catalyzes the transfer of sulfur to the sulfur carrier protein ThiS, forming ThiS-thiocarboxylate. This is a step in the synthesis of thiazole, in the thiamine biosynthesis pathway. The sulfur is donated as persulfide by IscS. The protein is Probable tRNA sulfurtransferase of Lactococcus lactis subsp. cremoris (strain MG1363).